A 363-amino-acid polypeptide reads, in one-letter code: Chorismate synthase (363 aa).

The NADP(+) site is built by Arg48 and Arg54. FMN-binding positions include 125–127 (RSS), 237–238 (NA), Gly277, 292–296 (KPTSS), and Arg318.

The protein belongs to the chorismate synthase family. Homotetramer. The cofactor is FMNH2.

It carries out the reaction 5-O-(1-carboxyvinyl)-3-phosphoshikimate = chorismate + phosphate. It functions in the pathway metabolic intermediate biosynthesis; chorismate biosynthesis; chorismate from D-erythrose 4-phosphate and phosphoenolpyruvate: step 7/7. Catalyzes the anti-1,4-elimination of the C-3 phosphate and the C-6 proR hydrogen from 5-enolpyruvylshikimate-3-phosphate (EPSP) to yield chorismate, which is the branch point compound that serves as the starting substrate for the three terminal pathways of aromatic amino acid biosynthesis. This reaction introduces a second double bond into the aromatic ring system. The protein is Chorismate synthase of Pseudomonas paraeruginosa (strain DSM 24068 / PA7) (Pseudomonas aeruginosa (strain PA7)).